Here is a 466-residue protein sequence, read N- to C-terminus: 55 kDa erythrocyte membrane protein (466 aa).

At Thr-2 the chain carries N-acetylthreonine. Ser-13 and Ser-19 each carry phosphoserine. At Thr-49 the chain carries Phosphothreonine. Residues Ser-52, Ser-57, and Ser-110 each carry the phosphoserine modification. A PDZ domain is found at 71–152 (LIQFEKVTEE…MISLKVIPNQ (82 aa)). The SH3 domain maps to 158 to 228 (ALQMFMRAQF…PSPELQEWRV (71 aa)). Ser-243 carries the post-translational modification Phosphoserine. Residues 268–466 (VVSYEEVVRL…PQWVPVSWVY (199 aa)) are interaction with PALS1. Positions 282–451 (RKTLVLIGAS…TLKKLQEAFD (170 aa)) constitute a Guanylate kinase-like domain.

This sequence belongs to the MAGUK family. As to quaternary structure, heterodimer with PALS1. Interacts with DLG5 and NF2. Interacts (via guanylate kinase-like domain) with WHRN (via third PDZ domain). In terms of processing, palmitoylated. Ubiquitous.

It localises to the cell membrane. Its subcellular location is the cell projection. The protein localises to the stereocilium. Its function is as follows. Essential regulator of neutrophil polarity. Regulates neutrophil polarization by regulating AKT1 phosphorylation through a mechanism that is independent of PIK3CG activity. The sequence is that of 55 kDa erythrocyte membrane protein (MPP1) from Homo sapiens (Human).